A 933-amino-acid polypeptide reads, in one-letter code: Melanoma-associated antigen E1 (933 aa).

Disordered stretches follow at residues 1-113 (MSLV…VSAG), 149-236 (GASI…GINL), 256-282 (SDIS…VQST), and 360-393 (TSGL…EDEN). Residues 8 to 23 (SRRRRGGRANGRKNSG) show a composition bias toward basic residues. Composition is skewed to polar residues over residues 64 to 97 (GGSS…QLPT), 149 to 166 (GASI…NVQP), 173 to 184 (GTSVPPTFSEES), and 219 to 236 (APST…GINL). MAGE domains lie at 467 to 666 (MEQN…YNEA) and 721 to 912 (LESK…YREA). Positions 719–933 (SRLESKSRKL…RRPLVVRNLR (215 aa)) are interaction with DTNA.

Interacts with DTNA. Interacts with TRIM28.

Its subcellular location is the cytoplasm. The protein resides in the perinuclear region. It localises to the nucleus. It is found in the cell membrane. May enhance ubiquitin ligase activity of RING-type zinc finger-containing E3 ubiquitin-protein ligases. Proposed to act through recruitment and/or stabilization of the Ubl-conjugating enzyme (E2) at the E3:substrate complex. This is Melanoma-associated antigen E1 (Magee1) from Rattus norvegicus (Rat).